The chain runs to 73 residues: UPF0346 protein SH1485 (73 aa).

The protein belongs to the UPF0346 family.

This chain is UPF0346 protein SH1485, found in Staphylococcus haemolyticus (strain JCSC1435).